A 315-amino-acid polypeptide reads, in one-letter code: Protoheme IX farnesyltransferase (315 aa).

9 consecutive transmembrane segments (helical) span residues 38-58 (IIELLLITTVPVMFLAEQGVP), 62-82 (LVLLTCVGGYLSAGGANALNM), 111-131 (LVFGITLAIVSTLLFGFTVNW), 132-152 (LSAWLSLGALLFYVVVYTMIL), 159-179 (NIVWGGIAGCLPVLIGWSAVT), 184-204 (WAPVILFGVMFFWTPPHYWPL), 233-253 (IVIYSWVMVVVSLLLQPLGYT), 255-275 (WFYTAVALAAGGMWLWEAHGL), and 293-313 (LFHWSITYVSVLFLAIAVDPF).

It belongs to the UbiA prenyltransferase family. Protoheme IX farnesyltransferase subfamily.

It localises to the cell membrane. It carries out the reaction heme b + (2E,6E)-farnesyl diphosphate + H2O = Fe(II)-heme o + diphosphate. The protein operates within porphyrin-containing compound metabolism; heme O biosynthesis; heme O from protoheme: step 1/1. Converts heme B (protoheme IX) to heme O by substitution of the vinyl group on carbon 2 of heme B porphyrin ring with a hydroxyethyl farnesyl side group. The chain is Protoheme IX farnesyltransferase from Streptomyces coelicolor (strain ATCC BAA-471 / A3(2) / M145).